The primary structure comprises 96 residues: Large ribosomal subunit protein bL27 (96 aa).

Residues 1 to 9 (MLRLDLQFF) constitute a propeptide that is removed on maturation. A disordered region spans residues 14-36 (GVGSTKNGRDSQSKRLGAKRADG).

This sequence belongs to the bacterial ribosomal protein bL27 family. The N-terminus is cleaved by ribosomal processing cysteine protease Prp.

The sequence is that of Large ribosomal subunit protein bL27 from Bacillus anthracis (strain A0248).